Reading from the N-terminus, the 506-residue chain is MPDTAPQLRLYNTLTRTKEAFAPIDAKNVRMYVCGPTVYDFAHIGNARPVIVFDVLFRLLRHVYGAQHVTYARNITDVDDKINARAARDYPDLPFNEAIRKVTESTNAQFQADVTALGNLQPTVQPRATEHMDEMRAMIDRLVQRGVAYVAQDHVLFSPSAMDARKGPRYGALARRSLDEMLAGARVDVASYKRDEMDFVLWKPSKKGEPGWPSPAGIETLGRPGWHIECSAMSMAKLLEPFGGGLKCDDPERNQFDIHGGGIDLVFPHHENEIAQSCCALGTERMANIWMHNGFLQVEGQKMSKSLGNFITIRDVLNDGLPQLGEWGDNTVRDRWAGLAARLSMLQTHYREPINWTAQRLAESADELHRWYGLLRDEGFGAPEKLSHASAVAAALCDDLNSWAAITALRQAFKVRDVAALGEGMALMGLLDPYFVTASDVPIFARADVDASAIAARIAERLNFINAKNWAEADRIRDELLQEGVQLKDSKDSATGERITTWDVVG.

Cys-34 contacts Zn(2+). The 'HIGH' region signature appears at Pro-36–Asn-46. Zn(2+) contacts are provided by Cys-230, His-269, and Glu-273. The short motif at Lys-302–Ser-306 is the 'KMSKS' region element. Lys-305 provides a ligand contact to ATP.

It belongs to the class-I aminoacyl-tRNA synthetase family. Monomer. The cofactor is Zn(2+).

The protein resides in the cytoplasm. The catalysed reaction is tRNA(Cys) + L-cysteine + ATP = L-cysteinyl-tRNA(Cys) + AMP + diphosphate. The polypeptide is Cysteine--tRNA ligase (Brucella ovis (strain ATCC 25840 / 63/290 / NCTC 10512)).